The primary structure comprises 309 residues: Aromatic prenyltransferase (309 aa).

It belongs to the aromatic prenyltransferase family.

In terms of biological role, prenyltransferase that attaches isoprenoid moieties to carbon atoms of aromatic substrates in an enzyme-catalyzed Friedel-Crafts reaction. Shows specificity for dimethylallyl diphosphate (DMAPP) and does not accept geranyl diphosphate (GPP) or isopentenyl diphosphate (IPP). Prenylates the artificial substrate 2,7-dihydroxynaphthalene (2,7-DHN), as well as dihydrophenazine-1-carboxylic acid and 4-hydroxybenzoic acid at lower levels. Only traces of products are detected with aspulvinone E or flaviolin as substrates; and no product is formed with L-tryptophan, L-tyrosine, or 4-hydroxyphenylpyruvate. Ptf seems no to be involved in the prenylation reaction in the biosynthesis of aspulvinone H and J and the physiological function of ptf remains unknown. The protein is Aromatic prenyltransferase of Sclerotinia sclerotiorum (strain ATCC 18683 / 1980 / Ss-1) (White mold).